The chain runs to 181 residues: uncharacterized protein (181 aa).

The tract at residues Ala-151 to Phe-181 is disordered. Basic and acidic residues predominate over residues Lys-154 to Gln-166. Positions Leu-167–Phe-181 are enriched in polar residues.

This is an uncharacterized protein from Caenorhabditis elegans.